The chain runs to 206 residues: LexA repressor (206 aa).

A DNA-binding region (H-T-H motif) is located at residues 28–48 (RAEIASELGFKSANAAEEHLK). Active-site for autocatalytic cleavage activity residues include Ser-122 and Lys-160.

Belongs to the peptidase S24 family. As to quaternary structure, homodimer.

It carries out the reaction Hydrolysis of Ala-|-Gly bond in repressor LexA.. Functionally, represses a number of genes involved in the response to DNA damage (SOS response), including recA and lexA. In the presence of single-stranded DNA, RecA interacts with LexA causing an autocatalytic cleavage which disrupts the DNA-binding part of LexA, leading to derepression of the SOS regulon and eventually DNA repair. The chain is LexA repressor from Tolumonas auensis (strain DSM 9187 / NBRC 110442 / TA 4).